The chain runs to 84 residues: Small ribosomal subunit protein uS17 (84 aa).

Belongs to the universal ribosomal protein uS17 family. Part of the 30S ribosomal subunit.

Its function is as follows. One of the primary rRNA binding proteins, it binds specifically to the 5'-end of 16S ribosomal RNA. The polypeptide is Small ribosomal subunit protein uS17 (Clostridium botulinum (strain 657 / Type Ba4)).